The primary structure comprises 193 residues: Bcl-2-binding component 3 (193 aa).

Disordered stretches follow at residues 1 to 32 (MARARQEGSSPEPVEGLARDSPRPFPLGRLMP) and 71 to 131 (ALGG…VEEE). Phosphoserine is present on S10. The BH3 signature appears at 137–151 (IGAQLRRMADDLNAQ).

It belongs to the Bcl-2 family. As to quaternary structure, interacts with MCL1 and BCL2A1. Interacts (via BH3 domain) with BCL2 and BCL2L1/BCL-XL. Interacts (via BH3 domain) with NOL3/ARC (via CARD domain); this interaction prevents BBC3 association with BCL2 and results in CASP8 activation.

It is found in the mitochondrion. In terms of biological role, essential mediator of p53/TP53-dependent and p53/TP53-independent apoptosis. Promotes partial unfolding of BCL2L1 and dissociation of BCL2L1 from p53/TP53, releasing the bound p53/TP53 to induce apoptosis. Regulates ER stress-induced neuronal apoptosis. This chain is Bcl-2-binding component 3 (Bbc3), found in Rattus norvegicus (Rat).